Reading from the N-terminus, the 212-residue chain is Pyridoxine/pyridoxamine 5'-phosphate oxidase (212 aa).

Substrate is bound by residues 8 to 11 (RREY) and K66. FMN-binding positions include 61 to 66 (RIVLLK), 76 to 77 (FT), R82, K83, and Q105. The substrate site is built by Y123, R127, and S131. Residues 140-141 (QS) and W185 contribute to the FMN site. 191–193 (RLH) contributes to the substrate binding site. R195 provides a ligand contact to FMN.

Belongs to the pyridoxamine 5'-phosphate oxidase family. In terms of assembly, homodimer. It depends on FMN as a cofactor.

It carries out the reaction pyridoxamine 5'-phosphate + O2 + H2O = pyridoxal 5'-phosphate + H2O2 + NH4(+). It catalyses the reaction pyridoxine 5'-phosphate + O2 = pyridoxal 5'-phosphate + H2O2. It participates in cofactor metabolism; pyridoxal 5'-phosphate salvage; pyridoxal 5'-phosphate from pyridoxamine 5'-phosphate: step 1/1. It functions in the pathway cofactor metabolism; pyridoxal 5'-phosphate salvage; pyridoxal 5'-phosphate from pyridoxine 5'-phosphate: step 1/1. In terms of biological role, catalyzes the oxidation of either pyridoxine 5'-phosphate (PNP) or pyridoxamine 5'-phosphate (PMP) into pyridoxal 5'-phosphate (PLP). In Shewanella baltica (strain OS155 / ATCC BAA-1091), this protein is Pyridoxine/pyridoxamine 5'-phosphate oxidase.